The sequence spans 61 residues: Photosystem II reaction center protein K (61 aa).

Residues 1 to 24 constitute a propeptide that is removed on maturation; that stretch reads MLNTFSLIGICLNSTLYSSSFFFG. A helical transmembrane segment spans residues 36 to 56; that stretch reads IVDIMPVIPLFFFLLAFVWQA.

The protein belongs to the PsbK family. PSII is composed of 1 copy each of membrane proteins PsbA, PsbB, PsbC, PsbD, PsbE, PsbF, PsbH, PsbI, PsbJ, PsbK, PsbL, PsbM, PsbT, PsbX, PsbY, PsbZ, Psb30/Ycf12, at least 3 peripheral proteins of the oxygen-evolving complex and a large number of cofactors. It forms dimeric complexes.

Its subcellular location is the plastid. It localises to the chloroplast thylakoid membrane. Functionally, one of the components of the core complex of photosystem II (PSII). PSII is a light-driven water:plastoquinone oxidoreductase that uses light energy to abstract electrons from H(2)O, generating O(2) and a proton gradient subsequently used for ATP formation. It consists of a core antenna complex that captures photons, and an electron transfer chain that converts photonic excitation into a charge separation. In Solanum bulbocastanum (Wild potato), this protein is Photosystem II reaction center protein K.